The chain runs to 569 residues: 4-coumarate--CoA ligase 2 (569 aa).

Positions 219, 220, 221, 222, 223, and 227 each coordinate ATP. (E)-4-coumaroyl-AMP contacts are provided by Phe-269 and Ser-273. Arg-290 contributes to the CoA binding site. Residues 292-361 are SBD1; that stretch reads EMGAMLGAIE…ARLPQAIFGQ (70 aa). Positions 339, 361, 362, 366, and 374 each coordinate (E)-4-coumaroyl-AMP. ATP is bound by residues Gln-361, Gly-362, and Thr-366. Positions 362–429 are SBD2; the sequence is GYGMTEAGPV…IRGPQIMKGY (68 aa). Residues Asp-450 and Arg-465 each contribute to the ATP site. Residues Lys-467 and Lys-471 each contribute to the (E)-4-coumaroyl-AMP site. 2 residues coordinate CoA: Lys-473 and Gly-474. Lys-556 is an ATP binding site.

It belongs to the ATP-dependent AMP-binding enzyme family. The cofactor is Mg(2+). Expressed in roots, stems, leaf blades, leaf sheaths and spikelets.

It catalyses the reaction (E)-ferulate + ATP + CoA = (E)-feruloyl-CoA + AMP + diphosphate. It carries out the reaction (E)-4-coumarate + ATP + CoA = (E)-4-coumaroyl-CoA + AMP + diphosphate. The enzyme catalyses (E)-caffeate + ATP + CoA = (E)-caffeoyl-CoA + AMP + diphosphate. The catalysed reaction is (E)-cinnamate + ATP + CoA = (E)-cinnamoyl-CoA + AMP + diphosphate. It catalyses the reaction (E)-ferulate + ATP + H(+) = (E)-feruloyl-AMP + diphosphate. It carries out the reaction (E)-feruloyl-AMP + CoA = (E)-feruloyl-CoA + AMP + H(+). The enzyme catalyses (E)-4-coumarate + ATP + H(+) = (E)-4-coumaroyl-AMP + diphosphate. The catalysed reaction is (E)-4-coumaroyl-AMP + CoA = (E)-4-coumaroyl-CoA + AMP + H(+). It catalyses the reaction (E)-caffeate + ATP + H(+) = (E)-caffeoyl-AMP + diphosphate. It carries out the reaction (E)-caffeoyl-AMP + CoA = (E)-caffeoyl-CoA + AMP + H(+). The protein operates within phytoalexin biosynthesis; 3,4',5-trihydroxystilbene biosynthesis; 3,4',5-trihydroxystilbene from trans-4-coumarate: step 1/2. In terms of biological role, involved in the phenylpropanoid metabolism by mediating the activation of a number of hydroxycinnamates for the biosynthesis of monolignols and other phenolic secondary metabolites. Catalyzes the formation of CoA esters of cinnamate, 4-coumarate, caffeate and ferulate. Is more efficient with substrates in the following order: ferulate &gt; 4-coumarate &gt; caffeate &gt; cinnamate. Cannot convert sinapate to its corresponding CoA ester. Follows a two-step reaction mechanism, wherein the carboxylate substrate first undergoes adenylation by ATP, followed by a thioesterification in the presence of CoA to yield the final CoA thioester. This is 4-coumarate--CoA ligase 2 from Oryza sativa subsp. japonica (Rice).